A 288-amino-acid chain; its full sequence is Bifunctional protein FolD (288 aa).

Residues 166-168 (GRS), Ser191, and Ile232 contribute to the NADP(+) site.

This sequence belongs to the tetrahydrofolate dehydrogenase/cyclohydrolase family. Homodimer.

It carries out the reaction (6R)-5,10-methylene-5,6,7,8-tetrahydrofolate + NADP(+) = (6R)-5,10-methenyltetrahydrofolate + NADPH. It catalyses the reaction (6R)-5,10-methenyltetrahydrofolate + H2O = (6R)-10-formyltetrahydrofolate + H(+). It participates in one-carbon metabolism; tetrahydrofolate interconversion. In terms of biological role, catalyzes the oxidation of 5,10-methylenetetrahydrofolate to 5,10-methenyltetrahydrofolate and then the hydrolysis of 5,10-methenyltetrahydrofolate to 10-formyltetrahydrofolate. The protein is Bifunctional protein FolD of Rickettsia africae (strain ESF-5).